We begin with the raw amino-acid sequence, 373 residues long: Arfaptin-1 (373 aa).

Residues 1–47 (MAQESPKNSAAEIPVTSNGEVDDAHEHGYNRDLKHSLPSGLGLSETQ) are disordered. At A2 the chain carries N-acetylalanine. S5 carries the post-translational modification Phosphoserine. Residues 22–35 (DDAHEHGYNRDLKH) show a composition bias toward basic and acidic residues. 5 positions are modified to phosphoserine: S36, S39, S69, S79, and S132. The AH domain maps to 153–353 (TVDLELEAQI…NQKQLELTLK (201 aa)). Residue T361 is modified to Phosphothreonine.

As to quaternary structure, forms homodimers or heterodimers with ARFIP2. Interacts with non-myristoylated GTP-bound ARF3, but not to GDP-bound ARF3. Interacts with ARF1. Binds with lower affinity to ARF5 and with very little affinity to ARF6. Interacts with ARL1. Interacts with ATG9A. In terms of processing, phosphorylated by PRKD1; phosphorylation delocalizes ARFIP1 from the Golgi and disrupts its ability to inhibit the activity of ADP-ribosylation factor, an important component of the vesicle scission machinery.

Its subcellular location is the golgi apparatus. The protein resides in the trans-Golgi network membrane. In terms of biological role, plays a role in controlling biogenesis of secretory granules at the trans-Golgi network. Mechanistically, binds ARF-GTP at the neck of a growing secretory granule precursor and forms a protective scaffold. Once the granule precursor has been completely loaded, active PRKD1 phosphorylates ARFIP1 and releases it from ARFs. In turn, ARFs induce fission. Through this mechanism, ensures proper secretory granule formation at the Golgi of pancreatic beta cells. This is Arfaptin-1 from Mus musculus (Mouse).